Consider the following 544-residue polypeptide: Cytochrome P450 2U1 (544 aa).

4 helical membrane-spanning segments follow: residues 30–50 (LDPS…GWSW), 113–133 (VYGS…LSDF), 261–281 (ICLN…YLPF), and 342–362 (LFYI…NSLL). Position 490 (cysteine 490) interacts with heme. The chain crosses the membrane as a helical span at residues 495 to 515 (LAKMELFLMFVSLMQSFAFAL).

It belongs to the cytochrome P450 family. The cofactor is heme. As to expression, widely expressed with stronger expression in thymus, heart and cerebellum.

It is found in the endoplasmic reticulum membrane. It localises to the microsome membrane. Its subcellular location is the mitochondrion inner membrane. The enzyme catalyses an omega-methyl-long-chain fatty acid + reduced [NADPH--hemoprotein reductase] + O2 = an omega-hydroxy-long-chain fatty acid + oxidized [NADPH--hemoprotein reductase] + H2O + H(+). It carries out the reaction (5Z,8Z,11Z,14Z)-eicosatetraenoate + reduced [NADPH--hemoprotein reductase] + O2 = 19-hydroxy-(5Z,8Z,11Z,14Z)-eicosatetraenoate + oxidized [NADPH--hemoprotein reductase] + H2O + H(+). It catalyses the reaction (5Z,8Z,11Z,14Z)-eicosatetraenoate + reduced [NADPH--hemoprotein reductase] + O2 = 20-hydroxy-(5Z,8Z,11Z,14Z)-eicosatetraenoate + oxidized [NADPH--hemoprotein reductase] + H2O + H(+). The catalysed reaction is N-[(5Z,8Z,11Z,14Z)-eicosatetraenoyl]-serotonin + reduced [NADPH--hemoprotein reductase] + O2 = 2-oxo-N-[(5Z,8Z,11Z,14Z)-eicosatetraenoyl]-serotonin + oxidized [NADPH--hemoprotein reductase] + H2O + H(+). Its pathway is lipid metabolism; arachidonate metabolism. Its function is as follows. A cytochrome P450 monooxygenase involved in the metabolism of arachidonic acid and its conjugates. Mechanistically, uses molecular oxygen inserting one oxygen atom into a substrate, and reducing the second into a water molecule, with two electrons provided by NADPH via cytochrome P450 reductase (CPR; NADPH-ferrihemoprotein reductase). Acts as an omega and omega-1 hydroxylase for arachidonic acid and possibly for other long chain fatty acids. May modulate the arachidonic acid signaling pathway and play a role in other fatty acid signaling processes. May down-regulate the biological activities of N-arachidonoyl-serotonin, an endocannabinoid that has anti-nociceptive effects through inhibition of fatty acid amide hydrolase FAAH, TRPV1 receptor and T-type calcium channels. Catalyzes C-2 oxidation of the indole ring of N-arachidonoyl-serotonin forming a less active product 2-oxo-N-arachidonoyl-serotonin. The protein is Cytochrome P450 2U1 of Homo sapiens (Human).